A 600-amino-acid polypeptide reads, in one-letter code: Elongation factor 4 (600 aa).

The 183-residue stretch at 5 to 187 folds into the tr-type G domain; it reads KYIRNFSIVA…EIVEKVPAPE (183 aa). GTP is bound by residues 17 to 22 and 134 to 137; these read DHGKST and NKVD.

Belongs to the TRAFAC class translation factor GTPase superfamily. Classic translation factor GTPase family. LepA subfamily.

It localises to the cell membrane. It catalyses the reaction GTP + H2O = GDP + phosphate + H(+). Its function is as follows. Required for accurate and efficient protein synthesis under certain stress conditions. May act as a fidelity factor of the translation reaction, by catalyzing a one-codon backward translocation of tRNAs on improperly translocated ribosomes. Back-translocation proceeds from a post-translocation (POST) complex to a pre-translocation (PRE) complex, thus giving elongation factor G a second chance to translocate the tRNAs correctly. Binds to ribosomes in a GTP-dependent manner. This is Elongation factor 4 from Clostridium perfringens (strain ATCC 13124 / DSM 756 / JCM 1290 / NCIMB 6125 / NCTC 8237 / Type A).